Here is a 549-residue protein sequence, read N- to C-terminus: Oxygen-dependent choline dehydrogenase (549 aa).

4–33 (DFVIIGSGSAGSALAYRLSEDGANSVVVLE) contacts FAD. The active-site Proton acceptor is the H465.

Belongs to the GMC oxidoreductase family. It depends on FAD as a cofactor.

The enzyme catalyses choline + A = betaine aldehyde + AH2. It catalyses the reaction betaine aldehyde + NAD(+) + H2O = glycine betaine + NADH + 2 H(+). The protein operates within amine and polyamine biosynthesis; betaine biosynthesis via choline pathway; betaine aldehyde from choline (cytochrome c reductase route): step 1/1. Involved in the biosynthesis of the osmoprotectant glycine betaine. Catalyzes the oxidation of choline to betaine aldehyde and betaine aldehyde to glycine betaine at the same rate. This is Oxygen-dependent choline dehydrogenase from Sinorhizobium medicae (strain WSM419) (Ensifer medicae).